Consider the following 230-residue polypeptide: Lecithin retinol acyltransferase (230 aa).

At 1-194 (MKNPMLEVVS…VKIIIRDQRS (194 aa)) the chain is on the cytoplasmic side. Residues 50 to 177 (VLEVPRTHLT…CRYGTPISPQ (128 aa)) enclose the LRAT domain. Active-site residues include histidine 60 and histidine 72. Cysteine 161 (acyl-thioester intermediate) is an active-site residue. Residues 195-215 (VLASAVLGLASIVCTGLVSYT) traverse the membrane as a helical segment. The Lumenal segment spans residues 216–230 (TLPAIFIPFFLWMAG).

This sequence belongs to the H-rev107 family. In terms of tissue distribution, hepatic stellate cells and endothelial cells (at protein level). Found at high levels in testis and liver, followed by retinal pigment epithelium, small intestine, prostate, pancreas and colon. Low expression observed in brain. In fetal tissues, expressed in retinal pigment epithelium and liver, and barely in the brain.

It is found in the endoplasmic reticulum membrane. It localises to the rough endoplasmic reticulum. Its subcellular location is the endosome. The protein localises to the multivesicular body. The protein resides in the cytoplasm. It is found in the perinuclear region. The enzyme catalyses all-trans-retinol--[retinol-binding protein] + a 1,2-diacyl-sn-glycero-3-phosphocholine = apo--[retinol-binding protein] + an all-trans-retinyl ester + a 2-acyl-sn-glycero-3-phosphocholine. The catalysed reaction is 1,2-dihexadecanoyl-sn-glycero-3-phosphocholine + all-trans-retinol = all-trans-retinyl hexadecanoate + 2-hexadecanoyl-sn-glycero-3-phosphocholine. It catalyses the reaction 1,2-diheptanoyl-sn-glycero-3-phosphocholine + all-trans-retinol--[retinol-binding protein] = all-trans-retinyl heptanoate + 2-heptanoyl-sn-glycero-3-phosphocholine + apo--[retinol-binding protein]. It carries out the reaction 1,2-dioctanoyl-sn-glycero-3-phosphocholine + all-trans-retinol--[retinol-binding protein] = 2-octanoyl-sn-glycero-3-phosphocholine + all-trans-retinyl octanoate + apo--[retinol-binding protein]. The enzyme catalyses all-trans-retinol--[retinol-binding protein] + 1,2-dihexadecanoyl-sn-glycero-3-phosphocholine = apo--[retinol-binding protein] + all-trans-retinyl hexadecanoate + 2-hexadecanoyl-sn-glycero-3-phosphocholine. The catalysed reaction is 1,2-didodecanoyl-sn-glycero-3-phosphocholine + all-trans-retinol--[retinol-binding protein] = 2-dodecanoyl-sn-glycero-3-phosphocholine + all-trans-retinyl dodecanoate + apo--[retinol-binding protein]. The protein operates within cofactor metabolism; retinol metabolism. Its activity is regulated as follows. Inhibited by all-trans-retinyl alpha-bromoacetate and N-boc-L-biocytinyl-11-aminoundecane chloro-methyl ketone (BACMK). Transfers the acyl group from the sn-1 position of phosphatidylcholine to all-trans retinol, producing all-trans retinyl esters. Retinyl esters are storage forms of vitamin A. LRAT plays a critical role in vision. It provides the all-trans retinyl ester substrates for the isomerohydrolase which processes the esters into 11-cis-retinol in the retinal pigment epithelium; due to a membrane-associated alcohol dehydrogenase, 11 cis-retinol is oxidized and converted into 11-cis-retinaldehyde which is the chromophore for rhodopsin and the cone photopigments. Required for the survival of cone photoreceptors and correct rod photoreceptor cell morphology. The protein is Lecithin retinol acyltransferase of Homo sapiens (Human).